The chain runs to 1183 residues: Atrophin-1 (1183 aa).

Disordered regions lie at residues 1–603 (MKTR…ITTS), 617–760 (SPAG…ARFN), and 780–855 (LEGS…HRPP). The Nuclear localization signal motif lies at 16-32 (RKKEAPGPREELRSRGR). A compositionally biased stretch (basic and acidic residues) spans 17 to 29 (KKEAPGPREELRS). Residue Ser-34 is modified to Phosphoserine. Over residues 45 to 63 (GKAEKSRQTAKKARVEETS) the composition is skewed to basic and acidic residues. Phosphoserine occurs at positions 77, 79, 100, 102, and 106. Over residues 107–127 (LDGRSINDDGSSDPRDIDQDN) the composition is skewed to basic and acidic residues. The span at 128–151 (RSTSPSIYSPGSVENDSDSSSGLS) shows a compositional bias: polar residues. 2 stretches are compositionally biased toward pro residues: residues 157–173 (PYHP…PPDS) and 207–218 (GPPPGAPPPHPQ). Residues 261-272 (IPISSSGASGAP) show a composition bias toward low complexity. Over residues 344–373 (PPGPEKGPTLAPSPHPLPPASSSAPGPPMR) the composition is skewed to pro residues. Over residues 377 to 400 (SSCSSSSVAASSSSSAATSQYPAS) the composition is skewed to low complexity. The segment covering 415–436 (SMSVSNQPPKYTQPSLPSQAVW) has biased composition (polar residues). An involved in binding BAIAP2 region spans residues 510–560 (HPLESSNSHHAHPYNMSPSLGSLRPYPPGPAHLPPSHGQVSYSQAGPNGPP). Residues 562 to 584 (SSSSNSSGSSSQAAYSCSHPSSS) show a composition bias toward low complexity. Ser-625 carries the phosphoserine modification. The residue at position 634 (Lys-634) is an N6-acetyllysine. Thr-646 carries the post-translational modification Phosphothreonine. Residue Ser-654 is modified to Phosphoserine. At Thr-662 the chain carries Phosphothreonine. 2 stretches are compositionally biased toward pro residues: residues 701-711 (LPPPPAAPTTG) and 732-745 (SPVP…PPPK). A Phosphoserine; by MAPK8 modification is found at Ser-732. Residues Ser-739 and Ser-741 each carry the phosphoserine modification. A compositionally biased stretch (basic and acidic residues) spans 788 to 832 (KRADLVEKVRREAEQRAREEKEREREREREKEREREKERELERSV). The tract at residues 872–887 (DTPALRTLSEYARPHV) is required for interaction with FAT1. At Ser-889 the chain carries Phosphoserine. Residues 921 to 940 (PAAREREREARERDLRDRLK) form a disordered region. The segment covering 922–940 (AAREREREARERDLRDRLK) has biased composition (basic and acidic residues). A Nuclear export signal motif is present at residues 1026-1034 (ALGNDPLAR). Residue Arg-1108 is modified to Asymmetric dimethylarginine. Lys-1176 participates in a covalent cross-link: Glycyl lysine isopeptide (Lys-Gly) (interchain with G-Cter in SUMO2).

As to quaternary structure, interacts with NR2E1; the interaction represses the transcriptional activity of NR2E1. Interact (via its N-terminus) with FAT1 (via a C-terminal domain). Interacts with BAIAP2, WWP1, WWP2, WWP3 and RERE. Interacts (via its N-terminus) with MTG8; the interaction enhances transcriptional repression of MTG8. Interacts with PQBP1. In terms of processing, phosphorylated in vitro by MAPK8/JNK1 on Ser-732. Predominant neuronal expression, Expressed in most brain regions including striatum, hippocampus, cerebral cortex, diencephalon, brain stem and cerebellum. Highest levels in cerebellum. Also highly expressed in kidney and testis, low expression in skeletal muscle and heart.

It localises to the nucleus. The protein resides in the cytoplasm. Its subcellular location is the perinuclear region. It is found in the cell junction. In terms of biological role, transcriptional corepressor. Recruits NR2E1 to repress transcription. Promotes vascular smooth cell (VSMC) migration and orientation. Corepressor of MTG8 transcriptional repression. Has some intrinsic repression activity. This is Atrophin-1 (Atn1) from Rattus norvegicus (Rat).